The following is a 418-amino-acid chain: Serine hydroxymethyltransferase (418 aa).

Residues Leu120 and 124 to 126 each bind (6S)-5,6,7,8-tetrahydrofolate; that span reads GHL. N6-(pyridoxal phosphate)lysine is present on Lys229.

It belongs to the SHMT family. Homodimer. Requires pyridoxal 5'-phosphate as cofactor.

It is found in the cytoplasm. It catalyses the reaction (6R)-5,10-methylene-5,6,7,8-tetrahydrofolate + glycine + H2O = (6S)-5,6,7,8-tetrahydrofolate + L-serine. The protein operates within one-carbon metabolism; tetrahydrofolate interconversion. It functions in the pathway amino-acid biosynthesis; glycine biosynthesis; glycine from L-serine: step 1/1. Its function is as follows. Catalyzes the reversible interconversion of serine and glycine with tetrahydrofolate (THF) serving as the one-carbon carrier. This reaction serves as the major source of one-carbon groups required for the biosynthesis of purines, thymidylate, methionine, and other important biomolecules. Also exhibits THF-independent aldolase activity toward beta-hydroxyamino acids, producing glycine and aldehydes, via a retro-aldol mechanism. This is Serine hydroxymethyltransferase from Myxococcus xanthus (strain DK1622).